The sequence spans 201 residues: Small ribosomal subunit protein uS4c (201 aa).

The interval 20–44 is disordered; the sequence is GLTSKRPKAGSDLRNQSRSGKKSQY. The 64-residue stretch at 89–152 folds into the S4 RNA-binding domain; that stretch reads MRLDNILFRL…NSRTLVQNLL (64 aa).

It belongs to the universal ribosomal protein uS4 family. Part of the 30S ribosomal subunit. Contacts protein S5. The interaction surface between S4 and S5 is involved in control of translational fidelity.

The protein resides in the plastid. Its subcellular location is the chloroplast. Functionally, one of the primary rRNA binding proteins, it binds directly to 16S rRNA where it nucleates assembly of the body of the 30S subunit. With S5 and S12 plays an important role in translational accuracy. The chain is Small ribosomal subunit protein uS4c (rps4) from Barbarea verna (Land cress).